The primary structure comprises 1748 residues: MTSKPSTRNDYLPRETHNGEYTGDSPEWQLQINITNKIGGINGDIWLSRDGRSVKWCIEDQCLRQFTYNQKIIKAGYIDFEKTPDCFVVVLSDIAHVYMLKNGGSTTVCFPFQIGNAFWYANGVILERETSASFMDGGYDLKPIEFDLKHKYITLTDPMAPFGLISITNTFKGGINSASGNKTDILQDFQLVLFPSDKDKCIAVFLDRNSKVLRFYYSRILSSDQSRKGELTISSTKKTGLDAAGNSQKSGGISKDLRKFSHLTRRSTSINSNSHDFNAAERVLSGNVGNASGRTDIFALPSSCSRRSLSATLDRMGNNIAPTNRAAPSGFFDSSSANTATHSNITPVSQPMQQQQQEYLNQTATSSKDIVLTEISSLKLPDDIIFTSRRLSSILSKLKFLSLRFERREGLLIFHEPTHFCKIWLIDLLPDVLDSIPFKIYGNSPQNMIRLENLKLKEPSRIQAMYIHELLESCLILVSEGQNKEEYKACLYDPFVKITSPSKNISEELTKQNSLPSLQKLFPYPETSFTKLCFEAVKYITSPAFNISFIFLWQSAYSILLSRANDDVVGGLKMEHDAFSLVLSLLILPIPSSSAQEYQEYKEIYERDLFQHLKQDSEITSSVLPRIVIGLHLIREEYSLNVLCRNEHALLGQFLRFATAAMGWPDLWQSYYVPKMDSESKTFLHPREQNSTFFHPLDEPPSITKSLYSITENSSIPLCPFISFSRLVATDTQVELRITPRSFKILGLYELVHSPNFLPDYVLGILSSFKVDKDELQTYPLGILVPLQNILKILEDKLSEVRDNLELLDRADLQRCSAIINSIRSDSKEVLKRGQRDSYMLCKVPLAKNRSSLSKKPSDIYSILSEIVKSASQVPLDGSAMRMSNIQDDEDIDEGRSLKLNAGLIFSEDKRFTHVVSLLAYYRPTKTQFFTTKTEYAQILAQKKYFAKIMALRTCTNGVGWGAVAYATEKPISTQKWVIQPLNLISVFPDDTKITVKAPEDIAHDIVEWGQFHAGVSSGLRISKKATGITGSWIAFNKPKELDAYHGGFLLGLGLNGHLKNLEEWHIYNYLSPRNTHISIGLLLGMSSSMKGSMDSKLIKVISVHLVAFLPSGSSDLNIDLKLQTAGIIGMGMLYLNSRHKRMSDSIFAQLVSLLNVNDEMVADEEYRLAAGISLGLINLGAGQTKLRKWDSSLLGLGDDLPEDVYDSSDVEQNVMYEDLTTKLLEIVTSTYDVENDWIPENSQIGAVIAIMFLFLKSNNFGISNMLKVDLKEILKANINTRPELLMYREWASNMILWEFIGDDLSFIMKDVDIGVKFSELNTDLLPIYYTMAGRILAMGIRFASTGNLKIRNILLSLVDKFLPLYQYPGKQNLDFRLTISVINVLTNVIVVSLSMVMCASGDLEVLRRVKYLHEVASGPYSDLFQEIPSSKSDVSGVTQVTSNTNTPGNSDRERVDETAASLDDERSSNGSDISDPTAYLEDKKDIDDHYGKFISTNLALGFLFLGSGQYALNTSTLESIAFLSMSVLPTYTTPHPLQELKHFWSMAVEPRCLVIKDISTGDAVNNVPIELVVEEDVEKEEVIREISTPCLLPDFSKIKSIRVKMHGYFPLEVNFTKDYSASDFFSGGTIIYIQRKSESVFENKASFRNVEDIHVALKRKAAESKNYSRLNLKNEQGNTTSSQLVESLGIQDLTMVELDTLLSAGNNTALTDSESYNLGLLCSDKNSGDILDCQLELWYKSFGPHDE.

Disordered stretches follow at residues 1 to 24 (MTSKPSTRNDYLPRETHNGEYTGD) and 1435 to 1479 (VSGV…DPTA). The segment covering 1435-1450 (VSGVTQVTSNTNTPGN) has biased composition (polar residues). A compositionally biased stretch (basic and acidic residues) spans 1451–1468 (SDRERVDETAASLDDERS). Ser1462 is subject to Phosphoserine.

It belongs to the APC1 family. In terms of assembly, the APC/C is composed of at least 13 subunits that stay tightly associated throughout the cell cycle: APC1, APC2, APC4, APC5, APC9, APC11, CDC16, CDC23, CDC26, CDC27, DOC1, MND2 and SWM1. APC1 interacts directly with MND2.

It is found in the nucleus. It localises to the cytoplasm. The protein localises to the cytoskeleton. The protein resides in the spindle pole. The protein operates within protein modification; protein ubiquitination. Functionally, component of the anaphase promoting complex/cyclosome (APC/C), a cell cycle-regulated E3 ubiquitin-protein ligase complex that controls progression through mitosis and the G1 phase of the cell cycle. The APC/C is thought to confer substrate specificity and, in the presence of ubiquitin-conjugating E2 enzymes, it catalyzes the formation of protein-ubiquitin conjugates that are subsequently degraded by the 26S proteasome. In early mitosis, the APC/C is activated by CDC20 and targets securin PDS1, the B-type cyclin CLB5, and other anaphase inhibitory proteins for proteolysis, thereby triggering the separation of sister chromatids at the metaphase-to-anaphase transition. In late mitosis and in G1, degradation of CLB5 allows activation of the APC/C by CDH1, which is needed to destroy CDC20 and the B-type cyclin CLB2 to allow exit from mitosis and creating the low CDK state necessary for cytokinesis and for reforming prereplicative complexes in G1 prior to another round of replication. The sequence is that of Anaphase-promoting complex subunit 1 (APC1) from Saccharomyces cerevisiae (strain ATCC 204508 / S288c) (Baker's yeast).